The sequence spans 2045 residues: Non-reducing polyketide synthase pks27 (2045 aa).

An N-terminal acylcarrier protein transacylase domain (SAT) region spans residues 10 to 247 (IVFGDLTCDS…LTIPIYAPYH (238 aa)). One can recognise a Ketosynthase family 3 (KS3) domain in the interval 380–813 (HSKLAIIGYS…GGNSSVLIED (434 aa)). Residues Cys-552, His-687, and His-731 each act as for beta-ketoacyl synthase activity in the active site. A malonyl-CoA:ACP transacylase (MAT) domain region spans residues 913 to 1213 (FAFTGQGSQY…VPTLQRNKDT (301 aa)). The segment at 1289–1422 (HKLVEEKKDG…ASITFPDAKA (134 aa)) is N-terminal hotdog fold. Residues 1289-1599 (HKLVEEKKDG…AQGVPRRLMD (311 aa)) enclose the PKS/mFAS DH domain. The active-site Proton acceptor; for dehydratase activity is His-1321. Residues 1442-1599 (AARLNTDDRV…AQGVPRRLMD (158 aa)) are C-terminal hotdog fold. Asp-1511 serves as the catalytic Proton donor; for dehydratase activity. The segment at 1612-1636 (APAGGTLNASQSAAANPAADPSAQA) is disordered. The span at 1619 to 1636 (NASQSAAANPAADPSAQA) shows a compositional bias: low complexity. A Carrier domain is found at 1635–1712 (QADSDNWQAA…ELEAFWKQGA (78 aa)). Residues 1640–1709 (NWQAALKIIS…TIKELEAFWK (70 aa)) are product template (PT) domain. Ser-1672 bears the O-(pantetheine 4'-phosphoryl)serine mark. The tract at residues 1735-1776 (EAEVDQDKNSSDEDRSSLGTSSYEVISPNTTETTPEITKTSS) is disordered. Positions 1739-1750 (DQDKNSSDEDRS) are enriched in basic and acidic residues. Over residues 1760 to 1776 (ISPNTTETTPEITKTSS) the composition is skewed to low complexity. A thioesterase region spans residues 1798 to 2039 (TLFLLPDGSG…AKRLSEMIEG (242 aa)).

Pantetheine 4'-phosphate is required as a cofactor.

Its pathway is secondary metabolite biosynthesis. Its function is as follows. Non-reducing polyketide synthase (NRPKS); part of the gene cluster 27 that mediates the biosynthesis of asparasone A, a sclerotium-specific anthraquinone pigment important for sclerotial survival. Catalyzes the formation of the aromatic polyketide from acetyl coenzyme A and seven malonyl coenzyme A molecules. Through its product template (PT) domain, catalyzes the cyclization of polyketide backbone via C6-C11 aldolcondensation. The polypeptide is Non-reducing polyketide synthase pks27 (Aspergillus flavus (strain ATCC 200026 / FGSC A1120 / IAM 13836 / NRRL 3357 / JCM 12722 / SRRC 167)).